We begin with the raw amino-acid sequence, 341 residues long: Probable membrane-associated kinase regulator 1 (341 aa).

Disordered stretches follow at residues 1–29, 67–122, 158–185, 206–230, and 288–310; these read MRRQ…FEFN, TLGS…SSRP, PKTN…KRMS, LSPK…NNIR, and RGGF…SVSS. Composition is skewed to low complexity over residues 12–29, 67–108, and 167–180; these read PPQS…FEFN, TLGS…SFPL, and SSSS…APSS. The span at 208 to 230 shows a compositional bias: polar residues; the sequence is PKQSSNIKTESSSSLKDSGNNIR. Low complexity predominate over residues 297 to 310; that stretch reads SCSSSSSNNNSVSS.

In terms of assembly, a C-terminus-derived peptide binds BRI1 in vitro.

It is found in the cell membrane. Its function is as follows. May negatively regulate brassinosteroid signaling. The polypeptide is Probable membrane-associated kinase regulator 1 (MAKR1) (Arabidopsis thaliana (Mouse-ear cress)).